A 238-amino-acid polypeptide reads, in one-letter code: 2-C-methyl-D-erythritol 4-phosphate cytidylyltransferase (238 aa).

Belongs to the IspD/TarI cytidylyltransferase family. IspD subfamily.

The enzyme catalyses 2-C-methyl-D-erythritol 4-phosphate + CTP + H(+) = 4-CDP-2-C-methyl-D-erythritol + diphosphate. Its pathway is isoprenoid biosynthesis; isopentenyl diphosphate biosynthesis via DXP pathway; isopentenyl diphosphate from 1-deoxy-D-xylulose 5-phosphate: step 2/6. Functionally, catalyzes the formation of 4-diphosphocytidyl-2-C-methyl-D-erythritol from CTP and 2-C-methyl-D-erythritol 4-phosphate (MEP). The protein is 2-C-methyl-D-erythritol 4-phosphate cytidylyltransferase of Acinetobacter baumannii (strain SDF).